The following is a 138-amino-acid chain: MAARLCCQLDSSRDVLLLRPLRGQPSGPSVSGTSAGSPSSAASAFSSGHQADIPVGRLPACFYSSAGPCCLGFTCADLRTMDSTVNFVPWHAKRQLGMMQKDFWTAYIRDQLLTLWEEGIIDPRLKLFVLGGCRHKYM.

The interval 20–43 (PLRGQPSGPSVSGTSAGSPSSAAS) is disordered. Low complexity predominate over residues 25-43 (PSGPSVSGTSAGSPSSAAS). Residues 68 to 113 (PCCLGFTCADLRTMDSTVNFVPWHAKRQLGMMQKDFWTAYIRDQLL) form a mitochondrial targeting sequence region.

This sequence belongs to the orthohepadnavirus protein X family. As to quaternary structure, may form homodimer. May interact with host CEBPA, CFLAR, CREB1, DDB1, E4F1, HBXIP, HSPD1/HSP60, NFKBIA, POLR2E and SMAD4. Interacts with host SMC5-SMC6 complex and induces its degradation. Interacts with host TRPC4AP; leading to prevent ubiquitination of TRPC4AP. Interacts with host PLSCR1; this interaction promotes ubiquitination and degradation of HBx and impairs HBx-mediated cell proliferation. A fraction may be phosphorylated in insect cells and HepG2 cells, a human hepatoblastoma cell line. Phosphorylated in vitro by host protein kinase C or mitogen-activated protein kinase. N-acetylated in insect cells.

The protein resides in the host cytoplasm. It is found in the host nucleus. Its subcellular location is the host mitochondrion. In terms of biological role, multifunctional protein that plays a role in silencing host antiviral defenses and promoting viral transcription. Does not seem to be essential for HBV infection. May be directly involved in development of cirrhosis and liver cancer (hepatocellular carcinoma). Most of cytosolic activities involve modulation of cytosolic calcium. The effect on apoptosis is controversial depending on the cell types in which the studies have been conducted. May induce apoptosis by localizing in mitochondria and causing loss of mitochondrial membrane potential. May also modulate apoptosis by binding host CFLAR, a key regulator of the death-inducing signaling complex (DISC). Promotes viral transcription by using the host E3 ubiquitin ligase DDB1 to target the SMC5-SMC6 complex to proteasomal degradation. This host complex would otherwise bind to viral episomal DNA, and prevents its transcription. Moderately stimulates transcription of many different viral and cellular transcription elements. Promoters and enhancers stimulated by HBx contain DNA binding sites for NF-kappa-B, AP-1, AP-2, c-EBP, ATF/CREB, or the calcium-activated factor NF-AT. In Ground squirrel hepatitis virus (strain 27) (GSHV), this protein is Protein X.